A 255-amino-acid chain; its full sequence is Zinc finger CCCH domain-containing protein 37 (255 aa).

2 C3H1-type zinc fingers span residues 98–128 and 137–159; these read AYTGEPCPDFRRRPGAACPRGSTCPFAHGTF and YRTRPCRAGVACRRRVCFFAHTA.

The protein is Zinc finger CCCH domain-containing protein 37 of Oryza sativa subsp. japonica (Rice).